The following is a 491-amino-acid chain: uncharacterized protein (491 aa).

This is an uncharacterized protein from Schizosaccharomyces pombe (strain 972 / ATCC 24843) (Fission yeast).